The primary structure comprises 472 residues: 3-isopropylmalate dehydratase large subunit (472 aa).

[4Fe-4S] cluster is bound by residues Cys-347, Cys-407, and Cys-410.

It belongs to the aconitase/IPM isomerase family. LeuC type 1 subfamily. As to quaternary structure, heterodimer of LeuC and LeuD. It depends on [4Fe-4S] cluster as a cofactor.

The enzyme catalyses (2R,3S)-3-isopropylmalate = (2S)-2-isopropylmalate. It functions in the pathway amino-acid biosynthesis; L-leucine biosynthesis; L-leucine from 3-methyl-2-oxobutanoate: step 2/4. Catalyzes the isomerization between 2-isopropylmalate and 3-isopropylmalate, via the formation of 2-isopropylmaleate. This Opitutus terrae (strain DSM 11246 / JCM 15787 / PB90-1) protein is 3-isopropylmalate dehydratase large subunit.